A 75-amino-acid polypeptide reads, in one-letter code: DNA-directed RNA polymerase subunit epsilon (75 aa).

It belongs to the RNA polymerase subunit epsilon family. As to quaternary structure, RNAP is composed of a core of 2 alpha, a beta and a beta' subunit. The core is associated with a delta subunit, and at least one of epsilon or omega. When a sigma factor is associated with the core the holoenzyme is formed, which can initiate transcription.

The enzyme catalyses RNA(n) + a ribonucleoside 5'-triphosphate = RNA(n+1) + diphosphate. Its function is as follows. A non-essential component of RNA polymerase (RNAP). The sequence is that of DNA-directed RNA polymerase subunit epsilon from Lactobacillus gasseri (strain ATCC 33323 / DSM 20243 / BCRC 14619 / CIP 102991 / JCM 1131 / KCTC 3163 / NCIMB 11718 / NCTC 13722 / AM63).